Here is a 317-residue protein sequence, read N- to C-terminus: Ret finger protein-like 1 (317 aa).

The segment at 40–82 (CPVCSDYLEKPMSLECGCAVCFKCINSLQKEPHGEDLLCCCCS) adopts an RING-type zinc-finger fold. The B30.2/SPRY domain maps to 107–301 (EPKLKKILQM…DKSVLSICPV (195 aa)).

Post-translationally, phosphorylated by PKC and CDK1. The antiproliferative effect seems to be positively regulated by PKC phosphorylation and negatively by CDK1 phosphorylation. As to expression, seems to be expressed in prostate and less abundantly in adult brain, fetal liver, and fetal kidney.

Its subcellular location is the cytoplasm. It localises to the nucleus. Functionally, negatively regulates the G2-M phase transition, possibly by promoting cyclin B1/CCNB1 and CDK1 proteasomal degradation and thereby preventing their accumulation during interphase. The protein is Ret finger protein-like 1 (RFPL1) of Homo sapiens (Human).